The following is a 278-amino-acid chain: S-formylglutathione hydrolase YeiG (278 aa).

Residues Ser145, Asp223, and His256 each act as charge relay system in the active site.

It belongs to the esterase D family.

The catalysed reaction is S-formylglutathione + H2O = formate + glutathione + H(+). Its function is as follows. Serine hydrolase involved in the detoxification of formaldehyde. Hydrolyzes S-formylglutathione to glutathione and formate. In Shigella dysenteriae serotype 1 (strain Sd197), this protein is S-formylglutathione hydrolase YeiG (yeiG).